Reading from the N-terminus, the 251-residue chain is Transcription factor bHLH144 (251 aa).

Disordered regions lie at residues 1–20, 130–161, and 173–202; these read MQNN…NMHN, YEEN…YGNT, and NNNN…RKKM. The span at 9 to 18 shows a compositional bias: basic and acidic residues; it reads FSDEVGDRNM. A compositionally biased stretch (acidic residues) spans 130 to 147; it reads YEENDDNEGEEDGGDSEE. The span at 148–161 shows a compositional bias: polar residues; that stretch reads VSTARTSSRDYGNT. A compositionally biased stretch (low complexity) spans 173–192; the sequence is NNNNNNNSRKQSLSGSASSS. Positions 186–235 constitute a bHLH domain; sequence SGSASSSNNDGKGRKKMKKMMGVLRRIVPGGEQMNTACVLDEAVQYLKSL.

In terms of assembly, homodimer. Interacts with LHW.

Its subcellular location is the nucleus. The protein is Transcription factor bHLH144 (BHLH144) of Arabidopsis thaliana (Mouse-ear cress).